We begin with the raw amino-acid sequence, 225 residues long: Holliday junction branch migration complex subunit RuvA (225 aa).

The interval Met-1–Ser-71 is domain I. The tract at residues Ser-72–Ser-150 is domain II. Positions Lys-151–Ile-161 are flexible linker. The domain III stretch occupies residues Ile-161–Arg-225.

The protein belongs to the RuvA family. As to quaternary structure, homotetramer. Forms an RuvA(8)-RuvB(12)-Holliday junction (HJ) complex. HJ DNA is sandwiched between 2 RuvA tetramers; dsDNA enters through RuvA and exits via RuvB. An RuvB hexamer assembles on each DNA strand where it exits the tetramer. Each RuvB hexamer is contacted by two RuvA subunits (via domain III) on 2 adjacent RuvB subunits; this complex drives branch migration. In the full resolvosome a probable DNA-RuvA(4)-RuvB(12)-RuvC(2) complex forms which resolves the HJ.

Its subcellular location is the cytoplasm. Its function is as follows. The RuvA-RuvB-RuvC complex processes Holliday junction (HJ) DNA during genetic recombination and DNA repair, while the RuvA-RuvB complex plays an important role in the rescue of blocked DNA replication forks via replication fork reversal (RFR). RuvA specifically binds to HJ cruciform DNA, conferring on it an open structure. The RuvB hexamer acts as an ATP-dependent pump, pulling dsDNA into and through the RuvAB complex. HJ branch migration allows RuvC to scan DNA until it finds its consensus sequence, where it cleaves and resolves the cruciform DNA. This Prochlorococcus marinus (strain MIT 9312) protein is Holliday junction branch migration complex subunit RuvA.